Consider the following 1062-residue polypeptide: NACHT, LRR and PYD domains-containing protein 2 (1062 aa).

The Pyrin domain maps to 1 to 94 (MVSSAQMGFN…SERAKDEVRE (94 aa)). The 320-residue stretch at 207-526 (YTVVLYGPAG…LEKEEEEDRD (320 aa)) folds into the NACHT domain. 213–220 (GPAGLGKT) contributes to the ATP binding site. S671 bears the Phosphoserine mark. LRR repeat units lie at residues 812–832 (SLTC…KLLY), 841–861 (FLQR…KDLA), 869–889 (ELTH…KFLC), 898–918 (KLQT…CDLT), 926–946 (SLLC…KFLC), 955–976 (NLRC…DLCS), 983–1003 (SLVT…KMLF), and 1010–1033 (SGTL…LLEE).

The protein belongs to the NLRP family. In terms of assembly, interacts with CHUK. Interacts with IKBKB. Interacts with IKBKG. Interacts with MEFV. Interacts with PYCARD. Interacts (via pyrin domain) with PYDC2. Interacts with CARD8. Expressed at high levels in lung, placenta and thymus and at lower levels in ovary, intestine and brain. Highly abundant in oocytes and early embryos, however poorly expressed in somatic tissues such as brain, kidney, liver and spinal cord.

Its subcellular location is the cytoplasm. In terms of biological role, suppresses TNF- and CD40-induced NFKB1 activity at the level of the IKK complex, by inhibiting NFKBIA degradation induced by TNF. When associated with PYCARD, activates CASP1, leading to the secretion of mature pro-inflammatory cytokine IL1B. May be a component of the inflammasome, a protein complex which also includes PYCARD, CARD8 and CASP1 and whose function would be the activation of pro-inflammatory caspases. In Homo sapiens (Human), this protein is NACHT, LRR and PYD domains-containing protein 2 (NLRP2).